Here is a 141-residue protein sequence, read N- to C-terminus: Large ribosomal subunit protein uL16 (141 aa).

A disordered region spans residues 1-21; sequence MLMPKRVKYRKQQRGHNRGMA.

Belongs to the universal ribosomal protein uL16 family. As to quaternary structure, part of the 50S ribosomal subunit.

Binds 23S rRNA and is also seen to make contacts with the A and possibly P site tRNAs. This chain is Large ribosomal subunit protein uL16, found in Roseiflexus castenholzii (strain DSM 13941 / HLO8).